The chain runs to 141 residues: Hemoglobin subunit alpha (141 aa).

Positions Val-1–Arg-141 constitute a Globin domain. The residue at position 3 (Ser-3) is a Phosphoserine. Lys-7 and Lys-11 each carry N6-succinyllysine. Lys-16 is modified (N6-acetyllysine; alternate). Position 16 is an N6-succinyllysine; alternate (Lys-16). Phosphotyrosine is present on Tyr-24. Residue Ser-35 is modified to Phosphoserine. Residue Lys-40 is modified to N6-succinyllysine. O2 is bound at residue His-58. His-87 provides a ligand contact to heme b. Ser-102 is modified (phosphoserine). Thr-108 carries the post-translational modification Phosphothreonine. A phosphoserine mark is found at Ser-124 and Ser-131. Phosphothreonine is present on residues Thr-134 and Thr-137. Residue Ser-138 is modified to Phosphoserine.

This sequence belongs to the globin family. In terms of assembly, heterotetramer of two alpha chains and two beta chains. In terms of tissue distribution, red blood cells.

Functionally, involved in oxygen transport from the lung to the various peripheral tissues. Its function is as follows. Hemopressin acts as an antagonist peptide of the cannabinoid receptor CNR1. Hemopressin-binding efficiently blocks cannabinoid receptor CNR1 and subsequent signaling. The sequence is that of Hemoglobin subunit alpha (HBA) from Pteropus alecto (Black flying fox).